A 617-amino-acid chain; its full sequence is MCGIIGLAFAEGNSVAGALVRGLKRLEYRGYDSMGVAVIEPPGRLVVRKAAGKIGEVVRRTGVLSLRGRVGIGHTRWATHGPPNDVNAHPHTDCGGRVAVVHNGVIRNYASLRRELEARGHRLVSETDTELVAHLIEEYLGRGYSFLEALSLLGRVLRGSYALALLHLGEPDKVYFLRYKSPLVVGLGEGVNAVASDITAVLDVARDVIVLEDGEFGWISPEGVAIYRPRGDGGFEPLPPGALEERVKRVEWTPESASKAGYPHFMLKEIYEQPRALAETFEGIIEDPALLRAAGLVAGAGRLLIVGAGTSFHAGLVGHYYLSRLAGILGHPVVASEHKVYTPGVDGETVVVAVSQSGETYDTLEAVREWRGRGARVIGVTNVVGSALDREADVTLYLRAGPEIGVAATKTFLAQTILLQTLSIAAAGEAGRLTSGETRELTGVLEGAPDAARRAILASEGAAREAASLLKGAGSMYIIGRGLGGRLAMEAALKVKEVSYIHAEAYPAGESKHGPIALVEPGFKVYVVATSDSPEVMGNAIEMKARGASVTVVAPSDLQLDTPEGIEVLKMPPTGGETLLDPYSLTPYFQLLAYHLAVARGYDPDKPRNLAKTVTVE.

Residue Cys-2 is the Nucleophile; for GATase activity of the active site. The Glutamine amidotransferase type-2 domain occupies 2 to 222 (CGIIGLAFAE…DGEFGWISPE (221 aa)). SIS domains are found at residues 293–432 (AAGL…EAGR) and 466–607 (AASL…PDKP). Lys-612 (for Fru-6P isomerization activity) is an active-site residue.

In terms of assembly, homodimer.

It localises to the cytoplasm. The enzyme catalyses D-fructose 6-phosphate + L-glutamine = D-glucosamine 6-phosphate + L-glutamate. In terms of biological role, catalyzes the first step in hexosamine metabolism, converting fructose-6P into glucosamine-6P using glutamine as a nitrogen source. In Aeropyrum pernix (strain ATCC 700893 / DSM 11879 / JCM 9820 / NBRC 100138 / K1), this protein is Glutamine--fructose-6-phosphate aminotransferase [isomerizing].